We begin with the raw amino-acid sequence, 140 residues long: Ribosomal RNA large subunit methyltransferase H (140 aa).

2 residues coordinate S-adenosyl-L-methionine: leucine 55 and glycine 87.

The protein belongs to the RNA methyltransferase RlmH family. Homodimer.

Its subcellular location is the cytoplasm. It carries out the reaction pseudouridine(1915) in 23S rRNA + S-adenosyl-L-methionine = N(3)-methylpseudouridine(1915) in 23S rRNA + S-adenosyl-L-homocysteine + H(+). Functionally, specifically methylates the pseudouridine at position 1915 (m3Psi1915) in 23S rRNA. This chain is Ribosomal RNA large subunit methyltransferase H, found in Erythrobacter litoralis (strain HTCC2594).